The primary structure comprises 312 residues: Aspartate carbamoyltransferase catalytic subunit (312 aa).

The carbamoyl phosphate site is built by Arg58 and Thr59. Lys86 provides a ligand contact to L-aspartate. The carbamoyl phosphate site is built by Arg108, His136, and Gln139. Residues Arg169 and Arg223 each contribute to the L-aspartate site. Gly264 and Pro265 together coordinate carbamoyl phosphate.

Belongs to the aspartate/ornithine carbamoyltransferase superfamily. ATCase family. Heterododecamer (2C3:3R2) of six catalytic PyrB chains organized as two trimers (C3), and six regulatory PyrI chains organized as three dimers (R2).

The enzyme catalyses carbamoyl phosphate + L-aspartate = N-carbamoyl-L-aspartate + phosphate + H(+). It functions in the pathway pyrimidine metabolism; UMP biosynthesis via de novo pathway; (S)-dihydroorotate from bicarbonate: step 2/3. In terms of biological role, catalyzes the condensation of carbamoyl phosphate and aspartate to form carbamoyl aspartate and inorganic phosphate, the committed step in the de novo pyrimidine nucleotide biosynthesis pathway. This is Aspartate carbamoyltransferase catalytic subunit from Desulforamulus reducens (strain ATCC BAA-1160 / DSM 100696 / MI-1) (Desulfotomaculum reducens).